A 461-amino-acid chain; its full sequence is Argininosuccinate lyase (461 aa).

It belongs to the lyase 1 family. Argininosuccinate lyase subfamily.

Its subcellular location is the cytoplasm. The catalysed reaction is 2-(N(omega)-L-arginino)succinate = fumarate + L-arginine. Its pathway is amino-acid biosynthesis; L-arginine biosynthesis; L-arginine from L-ornithine and carbamoyl phosphate: step 3/3. The protein is Argininosuccinate lyase of Streptococcus gordonii (strain Challis / ATCC 35105 / BCRC 15272 / CH1 / DL1 / V288).